A 649-amino-acid polypeptide reads, in one-letter code: Vitamin K-dependent protein S (649 aa).

A propeptide spanning residues 1–14 is cleaved from the precursor; it reads SKQQASQVLVRKRR. The region spanning 15 to 60 is the Gla domain; the sequence is ANSMLEETKQGNLERECIEELCNKEEAREVFENDPETDYFYPKYLV. Residues Glu-20, Glu-21, Glu-28, Glu-30, Glu-33, Glu-34, Glu-39, Glu-40, Glu-43, Glu-46, and Glu-50 each carry the 4-carboxyglutamate modification. A disulfide bond links Cys-31 and Cys-36. The interval 61-89 is thrombin-sensitive; the sequence is CLRSFQSGLFTAARQSTDAYPDLRSCVNA. The EGF-like 1 domain occupies 90-128; it reads IPDQCSPLPCNEDGYMSCKDGKASFTCTCKPGWQGERCE. 13 cysteine pairs are disulfide-bonded: Cys-94–Cys-107, Cys-99–Cys-116, Cys-118–Cys-127, Cys-134–Cys-148, Cys-144–Cys-157, Cys-159–Cys-172, Cys-178–Cys-190, Cys-185–Cys-199, Cys-201–Cys-214, Cys-220–Cys-229, Cys-225–Cys-238, Cys-240–Cys-255, and Cys-422–Cys-448. Residue Asp-109 is modified to (3R)-3-hydroxyaspartate. In terms of domain architecture, EGF-like 2; calcium-binding spans 130-173; it reads DINECKDPSNINGGCSQICDNTPGSYHCSCKSGFVMLSNKKDCK. One can recognise an EGF-like 3; calcium-binding domain in the interval 174-215; sequence DVDECSLKPNMCGTAVCKNIPGDFECECPEGYRYNLKSKSCE. The region spanning 216–256 is the EGF-like 4; calcium-binding domain; sequence DVDECSENMCAQLCVNYPGGYTCYCDGKKGFKLAQDQKSCE. Laminin G-like domains follow at residues 272 to 448 and 457 to 639; these read LLYL…NKHC and YYPG…AHSC. 3 N-linked (GlcNAc...) asparagine glycosylation sites follow: Asn-472, Asn-482, and Asn-503. An intrachain disulfide couples Cys-612 to Cys-639.

The iron and 2-oxoglutarate dependent 3-hydroxylation of aspartate and asparagine is (R) stereospecific within EGF domains. Plasma.

It is found in the secreted. Functionally, anticoagulant plasma protein; it is a cofactor to activated protein C in the degradation of coagulation factors Va and VIIIa. It helps to prevent coagulation and stimulating fibrinolysis. The sequence is that of Vitamin K-dependent protein S (PROS1) from Macaca mulatta (Rhesus macaque).